We begin with the raw amino-acid sequence, 222 residues long: Probable GTP-binding protein EngB (222 aa).

Residues 25–199 (AGVEVAFAGR…SQLLQNWFDT (175 aa)) form the EngB-type G domain. GTP-binding positions include 33–40 (GRSNAGKS), 60–64 (GRTQH), 78–81 (DLPG), 145–148 (TKAD), and 178–180 (FSS). 2 residues coordinate Mg(2+): Ser-40 and Thr-62.

It belongs to the TRAFAC class TrmE-Era-EngA-EngB-Septin-like GTPase superfamily. EngB GTPase family. It depends on Mg(2+) as a cofactor.

Functionally, necessary for normal cell division and for the maintenance of normal septation. The sequence is that of Probable GTP-binding protein EngB from Nitrosomonas europaea (strain ATCC 19718 / CIP 103999 / KCTC 2705 / NBRC 14298).